The chain runs to 204 residues: CASP-like protein 3A1 (204 aa).

At 1 to 39 the chain is on the cytoplasmic side; the sequence is MGSIGNGRNGSEVGIQIPAMGNKEVLERPAIPRWPRLGV. The helical transmembrane segment at 40–60 threads the bilayer; that stretch reads VMVATRAVALVMAVLSMALMI. At 61 to 88 the chain is on the extracellular side; sequence SAKQRGSLKIFGIEIPLYANWSFSDSLE. An N-linked (GlcNAc...) asparagine glycan is attached at N80. A helical membrane pass occupies residues 89 to 109; sequence YLVGMSAVSAAYCLAQLLLTA. Topologically, residues 110–124 are cytoplasmic; that stretch reads HKAVKNAPVVQSRNY. A helical membrane pass occupies residues 125–145; sequence AWLLFTGDQIFAYAMMSAGSA. Over 146–179 the chain is Extracellular; it reads AAAVANLNRTGIRHTALPNFCKPLPRFCDLSAAS. An N-linked (GlcNAc...) asparagine glycan is attached at N153. The helical transmembrane segment at 180-200 threads the bilayer; that stretch reads IACAFLSCIFLAASAVIDVIW. Residues 201–204 lie on the Cytoplasmic side of the membrane; that stretch reads LSNM.

Belongs to the Casparian strip membrane proteins (CASP) family. Homodimer and heterodimers.

Its subcellular location is the cell membrane. In Oryza sativa subsp. indica (Rice), this protein is CASP-like protein 3A1.